Consider the following 234-residue polypeptide: Sugar fermentation stimulation protein homolog (234 aa).

It belongs to the SfsA family.

This is Sugar fermentation stimulation protein homolog from Shewanella piezotolerans (strain WP3 / JCM 13877).